Consider the following 793-residue polypeptide: Copalyl diphosphate synthase CPS1, chloroplastic (793 aa).

The transit peptide at 1 to 59 (MASLSSTILSRSPAARRRITPASAKLHRPECFATSAWMGSSSKNLSLSYQLNHKKISVA) directs the protein to the chloroplast. K238 lines the substrate pocket. Residues D370 and D372 each contribute to the Mg(2+) site. Residues 370–373 (DIDD) carry the DXDD motif motif. K457 provides a ligand contact to substrate.

The protein belongs to the terpene synthase family. It depends on Mg(2+) as a cofactor.

It is found in the plastid. It localises to the chloroplast. The catalysed reaction is (2E,6E,10E)-geranylgeranyl diphosphate = (+)-copalyl diphosphate. The protein operates within secondary metabolite biosynthesis; terpenoid biosynthesis. Functionally, involved in tanshinone biosynthesis in hairy roots. Catalyzes the conversion of geranylgeranyl diphosphate (GGPP) to copalyl diphosphate (CPP). In Salvia miltiorrhiza (Chinese sage), this protein is Copalyl diphosphate synthase CPS1, chloroplastic.